A 321-amino-acid chain; its full sequence is Lipoyl synthase (321 aa).

The [4Fe-4S] cluster site is built by Cys68, Cys73, Cys79, Cys94, Cys98, Cys101, and Ser308. One can recognise a Radical SAM core domain in the interval 80-297 (FNHGTATFMI…KEIALELGFT (218 aa)).

The protein belongs to the radical SAM superfamily. Lipoyl synthase family. It depends on [4Fe-4S] cluster as a cofactor.

It is found in the cytoplasm. It catalyses the reaction [[Fe-S] cluster scaffold protein carrying a second [4Fe-4S](2+) cluster] + N(6)-octanoyl-L-lysyl-[protein] + 2 oxidized [2Fe-2S]-[ferredoxin] + 2 S-adenosyl-L-methionine + 4 H(+) = [[Fe-S] cluster scaffold protein] + N(6)-[(R)-dihydrolipoyl]-L-lysyl-[protein] + 4 Fe(3+) + 2 hydrogen sulfide + 2 5'-deoxyadenosine + 2 L-methionine + 2 reduced [2Fe-2S]-[ferredoxin]. Its pathway is protein modification; protein lipoylation via endogenous pathway; protein N(6)-(lipoyl)lysine from octanoyl-[acyl-carrier-protein]: step 2/2. In terms of biological role, catalyzes the radical-mediated insertion of two sulfur atoms into the C-6 and C-8 positions of the octanoyl moiety bound to the lipoyl domains of lipoate-dependent enzymes, thereby converting the octanoylated domains into lipoylated derivatives. The protein is Lipoyl synthase of Vibrio campbellii (strain ATCC BAA-1116).